A 459-amino-acid chain; its full sequence is tRNA(Ile2) 2-agmatinylcytidine synthetase TiaS (459 aa).

The OB DNA-binding region spans 282 to 360 (VRVRVWVASI…TINLEKLHII (79 aa)).

The protein belongs to the TiaS family.

Its subcellular location is the cytoplasm. It catalyses the reaction cytidine(34) in tRNA(Ile2) + agmatine + ATP + H2O = 2-agmatinylcytidine(34) in tRNA(Ile2) + AMP + 2 phosphate + 2 H(+). Its function is as follows. ATP-dependent agmatine transferase that catalyzes the formation of 2-agmatinylcytidine (agm2C) at the wobble position (C34) of tRNA(Ile2), converting the codon specificity from AUG to AUA. The sequence is that of tRNA(Ile2) 2-agmatinylcytidine synthetase TiaS from Staphylothermus marinus (strain ATCC 43588 / DSM 3639 / JCM 9404 / F1).